We begin with the raw amino-acid sequence, 643 residues long: Phosphomethylpyrimidine synthase (643 aa).

Substrate-binding positions include Asn248, Met277, Tyr306, His342, 362 to 364 (SRG), 403 to 406 (DGLR), and Glu442. Residue His446 coordinates Zn(2+). Tyr469 provides a ligand contact to substrate. A Zn(2+)-binding site is contributed by His510. Residues Cys590, Cys593, and Cys598 each coordinate [4Fe-4S] cluster.

It belongs to the ThiC family. As to quaternary structure, homodimer. [4Fe-4S] cluster serves as cofactor.

The enzyme catalyses 5-amino-1-(5-phospho-beta-D-ribosyl)imidazole + S-adenosyl-L-methionine = 4-amino-2-methyl-5-(phosphooxymethyl)pyrimidine + CO + 5'-deoxyadenosine + formate + L-methionine + 3 H(+). It functions in the pathway cofactor biosynthesis; thiamine diphosphate biosynthesis. In terms of biological role, catalyzes the synthesis of the hydroxymethylpyrimidine phosphate (HMP-P) moiety of thiamine from aminoimidazole ribotide (AIR) in a radical S-adenosyl-L-methionine (SAM)-dependent reaction. The polypeptide is Phosphomethylpyrimidine synthase (Burkholderia cenocepacia (strain ATCC BAA-245 / DSM 16553 / LMG 16656 / NCTC 13227 / J2315 / CF5610) (Burkholderia cepacia (strain J2315))).